The chain runs to 165 residues: Probable DNA polymerase III subunit chi (165 aa).

The protein belongs to the DNA polymerase III chi/HolC chain family. In terms of assembly, DNA polymerase III contains a core (composed of alpha, epsilon and theta chains) that associates with a tau subunit. This core dimerizes to form the POLIII' complex. PolIII' associates with the gamma complex (composed of gamma, delta, delta', psi and chi chains) and with the beta chain to form the complete DNA polymerase III complex. Interacts directly with the psi subunit (holD). The only subunit of the DNA polymerase III holoenzyme known to interact with single-stranded DNA binding protein (SSB).

It carries out the reaction DNA(n) + a 2'-deoxyribonucleoside 5'-triphosphate = DNA(n+1) + diphosphate. Its function is as follows. Part of the beta sliding clamp loading complex, which hydrolyzes ATP to load the beta clamp onto primed DNA to form the DNA replication pre-initiation complex. DNA polymerase III is a complex, multichain enzyme responsible for most of the replicative synthesis in bacteria. This DNA polymerase also exhibits 3' to 5' exonuclease activity. The sequence is that of Probable DNA polymerase III subunit chi from Rickettsia prowazekii (strain Madrid E).